A 566-amino-acid polypeptide reads, in one-letter code: Chromatin assembly factor 1 subunit B (566 aa).

WD repeat units follow at residues 11-54, 64-103, 127-166, 169-208, 228-279, and 351-392; these read HNKE…DGKA, RHTKAVNVVRFSPSGEVLASGGDDAVILLWKLNDSKELEP, GHLEDVYDICWTSDGNYMASASVDNTAIMWDVVKGQKVSI, EHKSYVQGITWDPLGQYIATLSCDRVLRVYNTQTKRVAFN, FHDD…RPMG, and IHYH…IPLK. Disordered stretches follow at residues 411-481 and 501-566; these read KSQP…NQPR and IPLK…KPNK. Polar residues-rich tracts occupy residues 425–437 and 469–478; these read TEGTSLSTPTLQP and QPASQSTKVN.

Belongs to the WD repeat HIR1 family. In terms of assembly, interacts with CHAF1A.

Its subcellular location is the nucleus. Its function is as follows. Acts as a component of the histone chaperone complex chromatin assembly factor 1 (CAF-1), which assembles histone octamers onto DNA during replication and repair. CAF-1 performs the first step of the nucleosome assembly process, bringing newly synthesized histones H3 and H4 to replicating DNA; histones H2A/H2B can bind to this chromatin precursor subsequent to DNA replication to complete the histone octamer. The sequence is that of Chromatin assembly factor 1 subunit B (CHAF1B) from Gallus gallus (Chicken).